Reading from the N-terminus, the 296-residue chain is DNA-3-methyladenine glycosylase (296 aa).

Ser-110 bears the Phosphoserine mark. Residue Asp-209 is the Proton acceptor of the active site.

Belongs to the alkylbase DNA glycosidase AlkA family.

Its subcellular location is the nucleus. The catalysed reaction is Hydrolysis of alkylated DNA, releasing 3-methyladenine, 3-methylguanine, 7-methylguanine and 7-methyladenine.. In terms of biological role, hydrolysis of the deoxyribose N-glycosidic bond to excise 3-methyladenine or 7-methyladenine from the damaged DNA polymer formed by alkylation lesions. This Saccharomyces cerevisiae (strain ATCC 204508 / S288c) (Baker's yeast) protein is DNA-3-methyladenine glycosylase (MAG1).